Reading from the N-terminus, the 275-residue chain is MPRKAKEYPEEGEFVVATVKNIHPYGAFLTLDEYPGKEGFMHISEVAPTWVKNIRDYLKEGQKIVAKVIRVDPEKGHIDLSLKRVNQQQRKAKLQEYKRAQKAENLLKMAAEKLGKDFETAWREVWVPLEEEYGEVYAAFEDAAQNGMDVLKGLISDEWIEALKPIIEAYVEIPTVTIDAEFEITVPKPNGIEIIKEALIKARDRANQEKDIEVKFSYQGAPRYRIDITAPDYYKAEEVLEDIAEEILRVIKEAGGEATLIRKEKRIKKVKKRGS.

One can recognise an S1 motif domain in the interval 12–83; it reads GEFVVATVKN…EKGHIDLSLK (72 aa).

This sequence belongs to the eIF-2-alpha family. In terms of assembly, heterotrimer composed of an alpha, a beta and a gamma chain.

EIF-2 functions in the early steps of protein synthesis by forming a ternary complex with GTP and initiator tRNA. The chain is Translation initiation factor 2 subunit alpha from Thermococcus kodakarensis (strain ATCC BAA-918 / JCM 12380 / KOD1) (Pyrococcus kodakaraensis (strain KOD1)).